A 316-amino-acid polypeptide reads, in one-letter code: C-type lectin domain family 10 member A (316 aa).

Residues 1–39 are Cytoplasmic-facing; sequence MTRTYENFQYLENKVKVQGFKNGPLPLQSLLQRLCSGPC. The short motif at 5–8 is the Endocytosis signal element; sequence YENF. The helical; Signal-anchor for type II membrane protein transmembrane segment at 40–60 threads the bilayer; the sequence is HLLLSLGLGLLLLVIICVVGF. The Extracellular portion of the chain corresponds to 61 to 316; sequence QNSKFQRDLV…GLGQTSQESH (256 aa). Asn78 and Asn173 each carry an N-linked (GlcNAc...) asparagine glycan. The stretch at 85 to 176 forms a coiled coil; that stretch reads AEIQALTSQG…VATLNNNAST (92 aa). 3 disulfide bridges follow: Cys181–Cys192, Cys209–Cys304, and Cys282–Cys296. Residues 188–305 form the C-type lectin domain; sequence HQDSCYWFSH…CQRPYHWVCE (118 aa). Ca(2+) contacts are provided by Val218, Asn220, Glu224, and Asp243. A glycoprotein is bound by residues Gln267 and Asp269. The Ca(2+) site is built by Asp269, Asp270, Glu280, and Asp281. Glu280 contributes to the a glycoprotein binding site. 2 residues coordinate a glycoprotein: His286 and Asn292. Residues Asn292, Asp293, and Glu305 each contribute to the Ca(2+) site.

In terms of assembly, interacts with A-, B- and C-domain containing PTPRC/CD45 isoforms: isoform 1/CD45ABC, isoform 3/CD45AB, isoform 5/CD45BC and isoform 7/CD45B. Does not interact with PTPRC/CD45 isoform 2/CD45RO, a memory T cell marker. As to expression, expressed in myeloid antigen presenting cells in lymph nodes and skin (at protein level). Expressed in dermal dendritic cells (at protein level).

The protein localises to the cell membrane. The protein resides in the early endosome membrane. It localises to the lysosome membrane. In terms of biological role, C-type lectin receptor involved in recognition of N-acetylgalactosamine (GalNAc)-terminated glycans by myeloid antigen presenting cells (APCs). Binds in a Ca(2+)-dependent manner to alpha- and beta-linked GalNAc residues on glycoprotein and glycolipid antigens, including alphaGalNAc- and Galbeta1-&gt;3GalNAc-O-Ser/Thr also known as Tn and T antigens, LacdiNAc epitope GalNAcbeta1-&gt;4GlcNAc and its derivative GalNAcbeta1-&gt;4-(Fucalpha1-&gt;3)GlcNAc, O-linked core 5 and 6 glycans, and GM2 and GD2 gangliosides. Acts as a signaling receptor at the interface of APC-T cell interactions. On immature dendritic cells, recognizes Tn antigen-carrying PTPRC/CD45 receptor on effector T cells and downregulates PTRPN/CD45 phosphatase activity with an impact on T cell activation threshold, cytokine production and proliferation. Modulates dendritic cell maturation toward a tolerogenic phenotype leading to generation of regulatory CD4-positive T cell subset with immune suppressive functions. Acts as an endocytic pattern recognition receptor involved in antitumor immunity. During tumorigenesis, recognizes Tn antigens and its sialylated forms Neu5Ac-Tn and Neu5Gc-Tn expressed on tumor cell mucins. On immature dendritic cells, can internalize Tn-terminated immunogens and target them to endolysosomal compartment for MHC class I and II antigen presentation to CD8-positive and CD4-positive T cells, respectively. The sequence is that of C-type lectin domain family 10 member A from Homo sapiens (Human).